The primary structure comprises 123 residues: uncharacterized protein (123 aa).

2 helical membrane-spanning segments follow: residues 55-77 (LLIHSYISFMLTLCFFLSLSTIL) and 92-114 (FFINIIICYKHKSSAYCVYTIVY).

It is found in the cell membrane. This is an uncharacterized protein from Pasteurella multocida (strain Pm70).